Here is a 197-residue protein sequence, read N- to C-terminus: MIILGLTGSIAMGKSTVSRLFAQMKRPVFDADKVVHQLQAPNGRLLSAIGQAFPGVIDEKGVNRQKLGAQLLQKPEGFRRLEAIIHPAVVEELHLFLRKNRSHPLVIVDIPLLFEAGFTRSVDYIAVVSAPYWIQKRRAVSRPNMTESRFRGLLARQWPDRKKRQQADFIIENGRNIIALAAQVRQITGCLVGQGSR.

Residues 3 to 197 form the DPCK domain; it reads ILGLTGSIAM…TGCLVGQGSR (195 aa). 11–16 provides a ligand contact to ATP; the sequence is AMGKST.

The protein belongs to the CoaE family.

It is found in the cytoplasm. It catalyses the reaction 3'-dephospho-CoA + ATP = ADP + CoA + H(+). The protein operates within cofactor biosynthesis; coenzyme A biosynthesis; CoA from (R)-pantothenate: step 5/5. In terms of biological role, catalyzes the phosphorylation of the 3'-hydroxyl group of dephosphocoenzyme A to form coenzyme A. This is Dephospho-CoA kinase from Zymomonas mobilis subsp. mobilis (strain ATCC 31821 / ZM4 / CP4).